We begin with the raw amino-acid sequence, 477 residues long: Phosphomethylpyrimidine synthase (477 aa).

Substrate is bound by residues asparagine 67, methionine 96, tyrosine 125, histidine 160, 180–182 (SRG), 221–224 (DGLR), and glutamate 260. Histidine 264 serves as a coordination point for Zn(2+). Tyrosine 287 is a substrate binding site. Zn(2+) is bound at residue histidine 328. [4Fe-4S] cluster-binding residues include cysteine 408, cysteine 411, and cysteine 416. A compositionally biased stretch (basic and acidic residues) spans 427–440 (AGDGMDGLESRTDL). The interval 427-477 (AGDGMDGLESRTDLDSSAAAAVNRPPTGVHRAEKLDDIPCPVAEDDVAADD) is disordered.

It belongs to the ThiC family. It depends on [4Fe-4S] cluster as a cofactor.

The enzyme catalyses 5-amino-1-(5-phospho-beta-D-ribosyl)imidazole + S-adenosyl-L-methionine = 4-amino-2-methyl-5-(phosphooxymethyl)pyrimidine + CO + 5'-deoxyadenosine + formate + L-methionine + 3 H(+). The protein operates within cofactor biosynthesis; thiamine diphosphate biosynthesis. Catalyzes the synthesis of the hydroxymethylpyrimidine phosphate (HMP-P) moiety of thiamine from aminoimidazole ribotide (AIR) in a radical S-adenosyl-L-methionine (SAM)-dependent reaction. The sequence is that of Phosphomethylpyrimidine synthase from Natronomonas pharaonis (strain ATCC 35678 / DSM 2160 / CIP 103997 / JCM 8858 / NBRC 14720 / NCIMB 2260 / Gabara) (Halobacterium pharaonis).